A 385-amino-acid polypeptide reads, in one-letter code: MNFTKIAVSAGCILALCAGCGANDTSSTKEKASSEKSGVTKEITASVNKMETIISKLNDSVEKGDQKEIEKKGKELNSYWLSFENDIRSDYPFEYTEIEKHLQPIYTEAQKDKPDAGKIKTESESLKASLEDLTEAKKSGKKASDQLAKAADEYKGYVKEQSDQLVKATEAFTGAVKSGDIEKSKTLYAKARVYYERIEPIAESLGDLDPKIDARENDVEEGDKWTGFHKLEKAIWKDQDISGEKATADQLLKDVKELDGSIQSLKLTPEQIVAGAMELLNEAGISKITGEEERYSRIDLVDLMANVEGSEAVYQTVKSALVKDHSDLTEKLDTEFSEFEVLMAKYKTNDQSYTSYDKLSEKQIRELSTKLTTLSETMSKIANVL.

Residues 1–22 (MNFTKIAVSAGCILALCAGCGA) form the signal peptide.

Belongs to the EfeM/EfeO family. Component of the iron transporter efeUOB/M complex composed of EfeU, EfeM and EfeB; EfeU is essential for the complex formation.

The protein resides in the cell membrane. It is found in the membrane raft. Functionally, part of the iron transporter system efeUOB/M involved in iron import. Specifically binds Fe(3+), which is produced by EfeB-mediated oxidation of Fe(2+), and delivers it to the cell membrane permease EfeU. This is Iron uptake system component EfeM from Bacillus subtilis (strain 168).